A 56-amino-acid chain; its full sequence is Ovomucoid (56 aa).

The Kazal-like domain occupies 6-56 (VDCSEYPKPACTMEQRPLCGSDNKTYGNKCNFCNAVVESNGTLTLSHFGKC). 3 disulfide bridges follow: C8/C38, C16/C35, and C24/C56. N45 carries an N-linked (GlcNAc...) asparagine glycan.

It localises to the secreted. The sequence is that of Ovomucoid from Afropavo congensis (Congo peafowl).